The chain runs to 78 residues: Acyl carrier protein (78 aa).

Positions 2–77 (SDTAERIKKI…DAVSYIDEHK (76 aa)) constitute a Carrier domain. Residue Ser-37 is modified to O-(pantetheine 4'-phosphoryl)serine.

It belongs to the acyl carrier protein (ACP) family. Post-translationally, 4'-phosphopantetheine is transferred from CoA to a specific serine of apo-ACP by AcpS. This modification is essential for activity because fatty acids are bound in thioester linkage to the sulfhydryl of the prosthetic group.

The protein resides in the cytoplasm. Its pathway is lipid metabolism; fatty acid biosynthesis. Carrier of the growing fatty acid chain in fatty acid biosynthesis. The sequence is that of Acyl carrier protein from Zymomonas mobilis subsp. mobilis (strain ATCC 31821 / ZM4 / CP4).